Consider the following 92-residue polypeptide: MALKIVESCVNCWACVDVCPSEAISLAGPHFEISASKCTECDGDYAEKQCASICPVEGAILLADGTPANPPGSLTGIPPERLAEAMREIQAR.

4Fe-4S ferredoxin-type domains are found at residues 2–28 (ALKI…SLAG) and 29–65 (PHFE…LADG). 8 residues coordinate [4Fe-4S] cluster: C9, C12, C15, C19, C38, C41, C50, and C54.

[4Fe-4S] cluster is required as a cofactor.

Ferredoxins are iron-sulfur proteins that transfer electrons in a wide variety of metabolic reactions. The polypeptide is Ferredoxin-like protein in nif region (Azotobacter vinelandii).